The sequence spans 253 residues: Sporulated oocyst TA4 antigen (253 aa).

The N-terminal stretch at 1 to 23 (MARLSFVSLLSLSLLFGQQAVRA) is a signal peptide. A propeptide spans 182–184 (RRL) (removed in mature form).

As to quaternary structure, the TA4 antigen is composed of a 17 kDa and a 8 kDa chain, linked by a disulfide bond.

This Eimeria tenella (Coccidian parasite) protein is Sporulated oocyst TA4 antigen.